The following is a 137-amino-acid chain: Ribosome-binding factor A (137 aa).

The protein belongs to the RbfA family. In terms of assembly, monomer. Binds 30S ribosomal subunits, but not 50S ribosomal subunits or 70S ribosomes.

The protein localises to the cytoplasm. Its function is as follows. One of several proteins that assist in the late maturation steps of the functional core of the 30S ribosomal subunit. Associates with free 30S ribosomal subunits (but not with 30S subunits that are part of 70S ribosomes or polysomes). Required for efficient processing of 16S rRNA. May interact with the 5'-terminal helix region of 16S rRNA. The chain is Ribosome-binding factor A from Cereibacter sphaeroides (strain KD131 / KCTC 12085) (Rhodobacter sphaeroides).